A 352-amino-acid chain; its full sequence is Glycerol-3-phosphate dehydrogenase [NAD(P)+] (352 aa).

NADPH contacts are provided by Trp-11, Arg-37, and Lys-112. The sn-glycerol 3-phosphate site is built by Lys-112, Gly-153, and Ser-155. Ala-157 is a binding site for NADPH. 5 residues coordinate sn-glycerol 3-phosphate: Lys-208, Asp-261, Ser-271, Arg-272, and Asn-273. Lys-208 acts as the Proton acceptor in catalysis. Arg-272 contributes to the NADPH binding site. Val-296 and Glu-298 together coordinate NADPH.

This sequence belongs to the NAD-dependent glycerol-3-phosphate dehydrogenase family.

It localises to the cytoplasm. It carries out the reaction sn-glycerol 3-phosphate + NAD(+) = dihydroxyacetone phosphate + NADH + H(+). The enzyme catalyses sn-glycerol 3-phosphate + NADP(+) = dihydroxyacetone phosphate + NADPH + H(+). The protein operates within membrane lipid metabolism; glycerophospholipid metabolism. Its function is as follows. Catalyzes the reduction of the glycolytic intermediate dihydroxyacetone phosphate (DHAP) to sn-glycerol 3-phosphate (G3P), the key precursor for phospholipid synthesis. This chain is Glycerol-3-phosphate dehydrogenase [NAD(P)+], found in Polaromonas naphthalenivorans (strain CJ2).